The sequence spans 789 residues: Potassium transporter 4 (789 aa).

The Cytoplasmic portion of the chain corresponds to Met-1 to Ser-32. At Ser-9 the chain carries Phosphoserine. A helical transmembrane segment spans residues Phe-33–Ile-53. At Gly-54–Ala-68 the chain is on the extracellular side. Residues Phe-69–Leu-89 form a helical membrane-spanning segment. Over Ser-90–Thr-154 the chain is Cytoplasmic. The chain crosses the membrane as a helical span at residues Ala-155 to Pro-175. At Ala-176–Asp-195 the chain is on the extracellular side. A helical transmembrane segment spans residues Gly-196 to Gly-216. At Thr-217–Arg-219 the chain is on the cytoplasmic side. Residues Val-220–Leu-240 traverse the membrane as a helical segment. Over Tyr-241–Gly-270 the chain is Extracellular. The chain crosses the membrane as a helical span at residues Trp-271 to Leu-291. The Cytoplasmic portion of the chain corresponds to Gly-292–Arg-300. Residues Val-301–Phe-321 form a helical membrane-spanning segment. The Extracellular segment spans residues Leu-322 to Pro-340. A helical membrane pass occupies residues Val-341–Ile-361. The Cytoplasmic portion of the chain corresponds to Thr-362–Gln-392. A helical membrane pass occupies residues Ile-393 to Phe-413. Residues Arg-414 to Gly-424 lie on the Extracellular side of the membrane. Residues Ile-425 to Val-445 form a helical membrane-spanning segment. Residues Trp-446 to Cys-450 lie on the Cytoplasmic side of the membrane. A helical transmembrane segment spans residues Phe-451 to Ala-471. Residues Leu-472–Gly-478 lie on the Extracellular side of the membrane. Residues Gly-479 to Gly-499 form a helical membrane-spanning segment. Residues Thr-500–Val-789 lie on the Cytoplasmic side of the membrane.

The protein belongs to the HAK/KUP transporter (TC 2.A.72.3) family. As to expression, detected at very low levels in roots, stems, leaves and flowers of mature plants and strongly expressed in the roots of potassium-starved plants.

It is found in the cell membrane. Its function is as follows. High-affinity potassium transporter. This Arabidopsis thaliana (Mouse-ear cress) protein is Potassium transporter 4 (POT4).